Reading from the N-terminus, the 228-residue chain is L-ribulose-5-phosphate 4-epimerase UlaF (228 aa).

Substrate-binding positions include 26–27, 43–44, and 72–73; these read GN, SG, and SS. The Zn(2+) site is built by Asp-74, His-93, and His-95. Asp-118 acts as the Proton donor/acceptor in catalysis. His-167 is a Zn(2+) binding site. The active-site Proton donor/acceptor is Tyr-225.

It belongs to the aldolase class II family. AraD/FucA subfamily. Zn(2+) serves as cofactor.

It catalyses the reaction L-ribulose 5-phosphate = D-xylulose 5-phosphate. Its pathway is cofactor degradation; L-ascorbate degradation; D-xylulose 5-phosphate from L-ascorbate: step 4/4. Catalyzes the isomerization of L-ribulose 5-phosphate to D-xylulose 5-phosphate. Is involved in the anaerobic L-ascorbate utilization. The chain is L-ribulose-5-phosphate 4-epimerase UlaF from Escherichia coli O7:K1 (strain IAI39 / ExPEC).